The sequence spans 349 residues: Protein-arginine kinase (349 aa).

The Phosphagen kinase C-terminal domain maps to 24-252 (IVLSSRIRLA…SQIIEQERQA (229 aa)). Residues 27–31 (SSRIR), His-89, Arg-123, 174–178 (RASVM), and 205–210 (RGIYGE) each bind ATP. Positions 335 to 340 (RDIKRA) match the RDXXRA motif of the pArg binding pocket involved in allosteric regulation motif.

It belongs to the ATP:guanido phosphotransferase family.

The enzyme catalyses L-arginyl-[protein] + ATP = N(omega)-phospho-L-arginyl-[protein] + ADP + H(+). Appears to be allosterically activated by the binding of pArg-containing polypeptides to the pArg-binding pocket localized in the C-terminal domain of McsB. Its function is as follows. Catalyzes the specific phosphorylation of arginine residues in proteins. This Halothermothrix orenii (strain H 168 / OCM 544 / DSM 9562) protein is Protein-arginine kinase.